Here is a 925-residue protein sequence, read N- to C-terminus: Ectonucleotide pyrophosphatase/phosphodiesterase family member 1 (925 aa).

The segment covering 1–17 has biased composition (gly residues); the sequence is MERDGCAGGGSRGGEGG. Residues 1–43 are disordered; that stretch reads MERDGCAGGGSRGGEGGRAPREGPAGNGRDRGRSHAAEAPGDP. At 1-76 the chain is on the cytoplasmic side; that stretch reads MERDGCAGGG…RTAKDPNTYK (76 aa). The short motif at 45 to 52 is the Di-leucine motif element; that stretch reads AAASLLAP. A helical; Signal-anchor for type II membrane protein transmembrane segment spans residues 77–97; it reads VLSLVLSVCVLTTILGCIFGL. The Extracellular segment spans residues 98 to 925; that stretch reads KPSCAKEVKS…THLPTFSQED (828 aa). 2 consecutive SMB domains span residues 104–144 and 145–189; these read EVKS…IEPE and HIWT…GEKS. 10 disulfide bridges follow: C108–C122, C112–C140, C120–C133, C126–C132, C149–C166, C154–C184, C164–C177, C170–C176, C195–C241, and C203–C415. An N-linked (GlcNAc...) asparagine glycan is attached at N179. A phosphodiesterase region spans residues 191 to 591; sequence VEEPCESINE…APNNGTHGSL (401 aa). AMP is bound by residues D218, T256, and N277. Zn(2+) contacts are provided by D218 and T256. T256 serves as the catalytic AMP-threonine intermediate. T256 and N277 together coordinate CMP. DTMP-binding residues include T256 and N277. GMP contacts are provided by T256 and N277. T256 bears the Phosphothreonine mark. Residue N285 is glycosylated (N-linked (GlcNAc...) asparagine). GMP is bound by residues L290, K295, and Y340. The AMP site is built by K295 and Y340. The CMP site is built by K295 and Y340. Y340 is a binding site for dTMP. N341 carries an N-linked (GlcNAc...) asparagine glycan. D376 lines the AMP pocket. D376, H380, D423, and H424 together coordinate Zn(2+). D376 provides a ligand contact to CMP. A dTMP-binding site is contributed by D376. D376 is a GMP binding site. H380 serves as a coordination point for 2',3'-cGAMP. H424 provides a ligand contact to AMP. Residue H424 coordinates CMP. Residue H424 participates in dTMP binding. H424 provides a ligand contact to GMP. 6 disulfides stabilise this stretch: C431/C530, C480/C868, C614/C672, C626/C726, C628/C711, and C838/C848. N-linked (GlcNAc...) asparagine glycosylation is present at N477. 2',3'-cGAMP is bound at residue S532. H535 is an AMP binding site. Position 535 (H535) interacts with Zn(2+). A CMP-binding site is contributed by H535. Residue H535 coordinates dTMP. H535 contacts GMP. N-linked (GlcNAc...) asparagine glycans are attached at residues N585, N643, N700, N731, and N748. Positions 597 to 647 are linker; it reads NPVYTPKHPKEVHPLVQCPFTRNPRDNLGCSCNPSILPIEDFQTQFNLTVA. The segment at 654 to 925 is nuclease-like domain; it reads HETLPYGRPR…THLPTFSQED (272 aa). Residues D800, D802, D804, R806, and D808 each contribute to the Ca(2+) site.

It belongs to the nucleotide pyrophosphatase/phosphodiesterase family. Homodimer. Interacts with INSR; leading to inhibit INSR autophosphorylation and subsequent activation of INSR kinase activity. In terms of assembly, monomeric. Requires Zn(2+) as cofactor. In terms of processing, autophosphorylated as part of the catalytic cycle of phosphodiesterase/pyrophosphatase activity. Post-translationally, N-glycosylated. The secreted form is produced through cleavage at Lys-103 by intracellular processing. As to expression, expressed in plasma cells and also in a number of non-lymphoid tissues, including the distal convoluted tubule of the kidney, chondrocytes and epididymis. Expressed in melanocytes but not in keratinocytes.

It localises to the cell membrane. It is found in the basolateral cell membrane. The protein resides in the secreted. It carries out the reaction Hydrolytically removes 5'-nucleotides successively from the 3'-hydroxy termini of 3'-hydroxy-terminated oligonucleotides.. The enzyme catalyses a ribonucleoside 5'-triphosphate + H2O = a ribonucleoside 5'-phosphate + diphosphate + H(+). It catalyses the reaction ATP + H2O = AMP + diphosphate + H(+). The catalysed reaction is UTP + H2O = UMP + diphosphate + H(+). It carries out the reaction GTP + H2O = GMP + diphosphate + H(+). The enzyme catalyses CTP + H2O = CMP + diphosphate + H(+). It catalyses the reaction 2',3'-cGAMP + 2 H2O = GMP + AMP + 2 H(+). The catalysed reaction is P(1),P(4)-bis(5'-adenosyl) tetraphosphate + H2O = AMP + ATP + 2 H(+). It carries out the reaction 3',5'-cyclic AMP + H2O = AMP + H(+). With respect to regulation, at low concentrations of ATP, a phosphorylated intermediate is formed which inhibits further hydrolysis. Nucleotide pyrophosphatase that generates diphosphate (PPi) and functions in bone mineralization and soft tissue calcification by regulating pyrophosphate levels. PPi inhibits bone mineralization and soft tissue calcification by binding to nascent hydroxyapatite crystals, thereby preventing further growth of these crystals. Preferentially hydrolyzes ATP, but can also hydrolyze other nucleoside 5' triphosphates such as GTP, CTP and UTP to their corresponding monophosphates with release of pyrophosphate, as well as diadenosine polyphosphates, and also 3',5'-cAMP to AMP. May also be involved in the regulation of the availability of nucleotide sugars in the endoplasmic reticulum and Golgi, and the regulation of purinergic signaling. Inhibits ectopic joint calcification and maintains articular chondrocytes by repressing hedgehog signaling; it is however unclear whether hedgehog inhibition is direct or indirect. Appears to modulate insulin sensitivity and function. Also involved in melanogenesis. Also able to hydrolyze 2',3'-cGAMP (cyclic GMP-AMP), a second messenger that activates TMEM173/STING and triggers type-I interferon production. 2',3'-cGAMP degradation takes place in the lumen or extracellular space, and not in the cytosol where it is produced; the role of 2',3'-cGAMP hydrolysis is therefore unclear. Not able to hydrolyze the 2',3'-cGAMP linkage isomer 3'-3'-cGAMP. This Homo sapiens (Human) protein is Ectonucleotide pyrophosphatase/phosphodiesterase family member 1.